A 387-amino-acid chain; its full sequence is BTB and MATH domain-containing protein 38 (387 aa).

The MATH domain maps to 79 to 204 (EGMLKLEIPN…NEMVTVTARV (126 aa)). Residues 228-295 (CDMTLVINKQ…IYPCHKPITS (68 aa)) form the BTB domain.

In Caenorhabditis elegans, this protein is BTB and MATH domain-containing protein 38 (bath-38).